The primary structure comprises 747 residues: Rho GTPase-activating protein 24 (747 aa).

Disordered stretches follow at residues 1–20 (MEER…KNTK) and 327–475 (FPKD…GTHS). Positions 17–123 (KNTKCGWLRK…WVKSIRRVIW (107 aa)) constitute a PH domain. The region spanning 133–327 (QKLEDTVRYE…VMISKHDRLF (195 aa)) is the Rho-GAP domain. 2 stretches are compositionally biased toward polar residues: residues 334 to 346 (QSKP…SNNN) and 355 to 367 (GQLQ…NTKE). Phosphoserine occurs at positions 368, 390, 395, 397, 401, 412, 414, and 436. A compositionally biased stretch (basic and acidic residues) spans 368–380 (SPVRRCSWDKPES). Residues 381–404 (PQRSSVDNGSPTALSGSKTNSPRN) are compositionally biased toward polar residues. Polar residues predominate over residues 431–475 (IVTNGSFSSSNAEGVEKPQTTPNGSLQARRTSSLKSSGTKMGTHS). Threonine 451 bears the Phosphothreonine mark. At serine 494 the chain carries Phosphoserine. The segment at 581–639 (DFYVGNFEDPVLDGPPQDDLSHPGDYENKSDRRSVGGRSSRATSSSDNSETFVGNTSSN) is disordered. Basic and acidic residues predominate over residues 599–614 (DLSHPGDYENKSDRRS). Positions 616-629 (GGRSSRATSSSDNS) are enriched in low complexity. Polar residues predominate over residues 630 to 639 (ETFVGNTSSN). Residues 648–728 (SSLKQEMTKQ…KEMEQFFSTF (81 aa)) are a coiled coil.

As to quaternary structure, interacts with FLNA. Post-translationally, phosphorylated by ROCK, leading to activate the RacGAP activity.

The protein resides in the cytoplasm. It is found in the cytoskeleton. It localises to the cell junction. The protein localises to the adherens junction. Its subcellular location is the focal adhesion. The protein resides in the cell projection. Its function is as follows. Rho GTPase-activating protein involved in cell polarity, cell morphology and cytoskeletal organization. Acts as a GTPase activator for the Rac-type GTPase by converting it to an inactive GDP-bound state. Controls actin remodeling by inactivating Rac downstream of Rho leading to suppress leading edge protrusion and promotes cell retraction to achieve cellular polarity. Able to suppress RAC1 and CDC42 activity in vitro. Overexpression induces cell rounding with partial or complete disruption of actin stress fibers and formation of membrane ruffles, lamellipodia, and filopodia. Isoform 2 is a vascular cell-specific GAP involved in modulation of angiogenesis. The sequence is that of Rho GTPase-activating protein 24 (Arhgap24) from Mus musculus (Mouse).